Here is a 478-residue protein sequence, read N- to C-terminus: Ribosome biogenesis protein NOP53 (478 aa).

Positions 1–10 (MAAGGSGVGG) are enriched in gly residues. Residues 1-51 (MAAGGSGVGGKRSSKSDADSGFLGLRPTSVDPALRRRRRGPRNKKRGWRRL) form a disordered region. N-acetylalanine is present on A2. A Phosphoserine modification is found at S29. Residues 35–49 (RRRRRGPRNKKRGWR) are compositionally biased toward basic residues. Phosphoserine occurs at positions 93 and 305. A mediates interaction with CDKN2A/isoform tumor suppressor ARF region spans residues 148-431 (KEQLWEKLAK…SELTDSLRTL (284 aa)). The mediates interaction with NF2 stretch occupies residues 181–478 (KPGPQDTVER…EKRAFREIQL (298 aa)). The segment at 303 to 344 (EESDGEGEPGQGEGPEAGDAEVCPTPARLATTEKKTEQQRRR) is disordered. Over residues 333 to 342 (TTEKKTEQQR) the composition is skewed to basic and acidic residues. Residues 342-386 (RRREKAVHRLRVQQAALRAARLRHQELFRLRGIKAQVALRLAELA) are mediates interaction with human herpesvirus 8 protein ORF16. Nucleolar localization signal stretches follow at residues 347-395 (AVHR…RQAR) and 396-478 (REAE…EIQL).

Belongs to the NOP53 family. Homooligomer. Interacts with PTEN; regulates PTEN phosphorylation and increases its stability. Interacts with RPL11; retains RPL11 into the nucleolus. Interacts with CDKN2A/isoform tumor suppressor ARF; the interaction is direct and promotes ARF nucleoplasmic relocalization and ubiquitin-mediated proteasomal degradation. Interacts with NPM1; the interaction is direct and competitive with MYC. Interacts with NF2 (via FERM domain); the interaction is direct. Interacts with p53/TP53 (via the oligomerization region); the interaction is direct and may prevent the MDM2-mediated proteasomal degradation of p53/TP53. Interacts with RIGI; may regulate RIGI through USP15-mediated 'Lys-63'-linked deubiquitination. Interacts with UBTF. In terms of assembly, (Microbial infection) Interacts with herpes simplex virus 1 early proteins ICP22 and ICP0. As to quaternary structure, (Microbial infection) Interacts with Human herpesvirus 8 protein ORF16; may sequester ORF16 in host nucleolus and reduce its antiapoptotic activity. Ubiquitin-mediated proteasomal degradation is regulated by c-JUN. It is associated with relocalization to the nucleoplasm and decreased homooligomerization. In terms of processing, phosphorylated upon DNA damage probably by ATM and DNA-PK; may regulate NOP53 degradation. Expressed at high levels in heart and pancreas, moderate levels in placenta, liver, skeletal muscle, and kidney, and low levels in brain and lung.

The protein resides in the nucleus. The protein localises to the nucleolus. It is found in the nucleoplasm. Nucleolar protein which is involved in the integration of the 5S RNP into the ribosomal large subunit during ribosome biogenesis. In ribosome biogenesis, may also play a role in rRNA transcription. Also functions as a nucleolar sensor that regulates the activation of p53/TP53 in response to ribosome biogenesis perturbation, DNA damage and other stress conditions. DNA damage or perturbation of ribosome biogenesis disrupt the interaction between NOP53 and RPL11 allowing RPL11 transport to the nucleoplasm where it can inhibit MDM2 and allow p53/TP53 activation. It may also positively regulate the function of p53/TP53 in cell cycle arrest and apoptosis through direct interaction, preventing its MDM2-dependent ubiquitin-mediated proteasomal degradation. Originally identified as a tumor suppressor, it may also play a role in cell proliferation and apoptosis by positively regulating the stability of PTEN, thereby antagonizing the PI3K-AKT/PKB signaling pathway. May also inhibit cell proliferation and increase apoptosis through its interaction with NF2. May negatively regulate NPM1 by regulating its nucleoplasmic localization, oligomerization and ubiquitin-mediated proteasomal degradation. Thereby, may prevent NPM1 interaction with MYC and negatively regulate transcription mediated by the MYC-NPM1 complex. May also regulate cellular aerobic respiration. In the cellular response to viral infection, may play a role in the attenuation of interferon-beta through the inhibition of RIGI. This is Ribosome biogenesis protein NOP53 from Homo sapiens (Human).